The primary structure comprises 144 residues: Large ribosomal subunit protein uL14 (144 aa).

This sequence belongs to the universal ribosomal protein uL14 family. Part of the 50S ribosomal subunit. Forms a cluster with proteins L3 and L24e, part of which may contact the 16S rRNA in 2 intersubunit bridges.

Its function is as follows. Binds to 23S rRNA. Forms part of two intersubunit bridges in the 70S ribosome. In Cenarchaeum symbiosum (strain A), this protein is Large ribosomal subunit protein uL14.